The sequence spans 89 residues: Small ribosomal subunit protein uS15 (89 aa).

The protein belongs to the universal ribosomal protein uS15 family. As to quaternary structure, part of the 30S ribosomal subunit. Forms a bridge to the 50S subunit in the 70S ribosome, contacting the 23S rRNA.

In terms of biological role, one of the primary rRNA binding proteins, it binds directly to 16S rRNA where it helps nucleate assembly of the platform of the 30S subunit by binding and bridging several RNA helices of the 16S rRNA. Its function is as follows. Forms an intersubunit bridge (bridge B4) with the 23S rRNA of the 50S subunit in the ribosome. The chain is Small ribosomal subunit protein uS15 from Psychromonas ingrahamii (strain DSM 17664 / CCUG 51855 / 37).